Consider the following 404-residue polypeptide: MREAPHVLGIVLAGGEGKRLYPLTADRAKPAVPFGGAYRLIDFVLSNLVNARYLRICVLTQYKSHSLDRHISQNWRLSGLAGEYITPVPAQQRLGPRWYTGSADAIYQSLNLIYDEDPDYIVVFGADHVYRMDPEQMVRFHIDSGAGVTVAGIRVPRADASAFGCIDADDAGTIRDFVEKPLEPPGTPDDPTSTFVSMGNYVFTTKVLIDAIRADADDDHSDHDMGGDIIPRLVADGMAAVYDFSNNEVPGATDRDRAYWRDVGTLDAFYDAHMDLVSVHPVFNLYNKRWPIRGESENLAPAKFVNGGSAQESVVGAGSIISAASVRNSVLSSNVVVEDGAIVEGSVIMPGARVGRGAVVRHAILDKNVVVGPGEMVGVDLDKDRERFAISAGGVVAVGKGVWI.

Alpha-D-glucose 1-phosphate-binding positions include tyrosine 99, glycine 164, 179-180 (EK), and serine 197.

The protein belongs to the bacterial/plant glucose-1-phosphate adenylyltransferase family.

It catalyses the reaction alpha-D-glucose 1-phosphate + ATP + H(+) = ADP-alpha-D-glucose + diphosphate. It functions in the pathway capsule biogenesis; capsule polysaccharide biosynthesis. Its pathway is glycan biosynthesis; glycogen biosynthesis. Its function is as follows. Involved in the biosynthesis of ADP-glucose, a building block, required in the biosynthesis of maltose-1-phosphate (M1P) and in the elongation reactions to produce linear alpha-1,4-glucans. Catalyzes the reaction between ATP and alpha-D-glucose 1-phosphate (G1P) to produce pyrophosphate and ADP-Glc. The polypeptide is Glucose-1-phosphate adenylyltransferase (Mycobacterium marinum (strain ATCC BAA-535 / M)).